The following is a 108-amino-acid chain: MSSAQSRGGKTGGKVGGKVGAKRHKKTQKEHINGITKPAIRRLARRGGVKRISFPIYEETRNVLRTFLTNVIRDSVAYTEHAGRRTVTAMDVVYALKRQGRTLYGFNS.

The segment at 1-36 (MSSAQSRGGKTGGKVGGKVGAKRHKKTQKEHINGIT) is disordered. The span at 9 to 19 (GKTGGKVGGKV) shows a compositional bias: gly residues.

This sequence belongs to the histone H4 family. In terms of assembly, the nucleosome is a histone octamer containing two molecules each of H2A, H2B, H3 and H4 assembled in one H3-H4 heterotetramer and two H2A-H2B heterodimers. The octamer wraps approximately 147 bp of DNA.

The protein resides in the nucleus. The protein localises to the chromosome. Its function is as follows. Core component of nucleosome. Nucleosomes wrap and compact DNA into chromatin, limiting DNA accessibility to the cellular machineries which require DNA as a template. Histones thereby play a central role in transcription regulation, DNA repair, DNA replication and chromosomal stability. DNA accessibility is regulated via a complex set of post-translational modifications of histones, also called histone code, and nucleosome remodeling. In Dictyostelium discoideum (Social amoeba), this protein is Histone H4 (H4a).